Reading from the N-terminus, the 449-residue chain is Myb family transcription factor PHL6 (449 aa).

The tract at residues 49–72 is disordered; that stretch reads PFIRSQSPDSPGQLWPKNSSQSTF. The 61-residue stretch at 238-298 folds into the HTH myb-type domain; the sequence is ANQKSRMRWT…HLQKYRLAKY (61 aa). The H-T-H motif DNA-binding region spans 269-294; sequence PKAVKKLMNVEGLTIYHVKSHLQKYR. The interval 301–327 is disordered; that stretch reads EKKEEKRTDNSEEKKLALSKSEADEKK. Residues 334 to 354 are coiled coil; it reads TEALRMQMEVQKQLHEQLEVQ. The short motif at 347–352 is the LHEQLE element; sequence LHEQLE. The interval 376 to 449 is disordered; it reads RKTGRWISSS…NIAESEDPKR (74 aa). The span at 381–410 shows a compositional bias: polar residues; it reads WISSSSQTVLSPSDDSIPDSQNMSKTKASS.

The protein belongs to the MYB-CC family.

The protein localises to the nucleus. The sequence is that of Myb family transcription factor PHL6 from Arabidopsis thaliana (Mouse-ear cress).